The following is a 301-amino-acid chain: Acetylglutamate kinase (301 aa).

Residues 68 to 69 (GG), Arg90, and Asn195 each bind substrate.

The protein belongs to the acetylglutamate kinase family. ArgB subfamily.

Its subcellular location is the cytoplasm. It catalyses the reaction N-acetyl-L-glutamate + ATP = N-acetyl-L-glutamyl 5-phosphate + ADP. It participates in amino-acid biosynthesis; L-arginine biosynthesis; N(2)-acetyl-L-ornithine from L-glutamate: step 2/4. Catalyzes the ATP-dependent phosphorylation of N-acetyl-L-glutamate. This chain is Acetylglutamate kinase, found in Pseudomonas fluorescens (strain Pf0-1).